The sequence spans 399 residues: Formate-dependent phosphoribosylglycinamide formyltransferase (399 aa).

N(1)-(5-phospho-beta-D-ribosyl)glycinamide-binding positions include 8 to 9 (EL) and E68. Residues R100, K141, 146-151 (SSGHGQ), 185-188 (EALA), and E193 contribute to the ATP site. The ATP-grasp domain occupies 105-308 (VLAHEELGLP…EFALHARAIL (204 aa)). The Mg(2+) site is built by E266 and E279. N(1)-(5-phospho-beta-D-ribosyl)glycinamide-binding positions include D286, K361, and 368 to 369 (RR).

Belongs to the PurK/PurT family. Homodimer.

It catalyses the reaction N(1)-(5-phospho-beta-D-ribosyl)glycinamide + formate + ATP = N(2)-formyl-N(1)-(5-phospho-beta-D-ribosyl)glycinamide + ADP + phosphate + H(+). The protein operates within purine metabolism; IMP biosynthesis via de novo pathway; N(2)-formyl-N(1)-(5-phospho-D-ribosyl)glycinamide from N(1)-(5-phospho-D-ribosyl)glycinamide (formate route): step 1/1. Functionally, involved in the de novo purine biosynthesis. Catalyzes the transfer of formate to 5-phospho-ribosyl-glycinamide (GAR), producing 5-phospho-ribosyl-N-formylglycinamide (FGAR). Formate is provided by PurU via hydrolysis of 10-formyl-tetrahydrofolate. The chain is Formate-dependent phosphoribosylglycinamide formyltransferase from Bifidobacterium adolescentis (strain ATCC 15703 / DSM 20083 / NCTC 11814 / E194a).